We begin with the raw amino-acid sequence, 176 residues long: Acireductone dioxygenase (176 aa).

Fe(2+) contacts are provided by histidine 81, histidine 83, glutamate 87, and histidine 126. The Ni(2+) site is built by histidine 81, histidine 83, glutamate 87, and histidine 126.

This sequence belongs to the acireductone dioxygenase (ARD) family. Requires Fe(2+) as cofactor. It depends on Ni(2+) as a cofactor.

The protein resides in the cytoplasm. It localises to the nucleus. The enzyme catalyses 1,2-dihydroxy-5-(methylsulfanyl)pent-1-en-3-one + O2 = 4-methylsulfanyl-2-oxobutanoate + formate + 2 H(+). It carries out the reaction 1,2-dihydroxy-5-(methylsulfanyl)pent-1-en-3-one + O2 = 3-(methylsulfanyl)propanoate + CO + formate + 2 H(+). The protein operates within amino-acid biosynthesis; L-methionine biosynthesis via salvage pathway; L-methionine from S-methyl-5-thio-alpha-D-ribose 1-phosphate: step 5/6. Functionally, catalyzes 2 different reactions between oxygen and the acireductone 1,2-dihydroxy-3-keto-5-methylthiopentene (DHK-MTPene) depending upon the metal bound in the active site. Fe-containing acireductone dioxygenase (Fe-ARD) produces formate and 2-keto-4-methylthiobutyrate (KMTB), the alpha-ketoacid precursor of methionine in the methionine recycle pathway. Ni-containing acireductone dioxygenase (Ni-ARD) produces methylthiopropionate, carbon monoxide and formate, and does not lie on the methionine recycle pathway. In Sclerotinia sclerotiorum (strain ATCC 18683 / 1980 / Ss-1) (White mold), this protein is Acireductone dioxygenase (adi1).